The primary structure comprises 1700 residues: MKTLSSLLLVLAVNVLLIQASPDPDNRCPARKYWNERKQACVCKRENRCYPIGAIFDPESCTFSMCQSKGCSAKQIFNKDKCACECRNDQPKDGCGAGRYWCNQDCSCKCSTPMSAGGCSGSQIWCEKSCACVCPNADKCTAPQVWNKDTCCCGCPVNMQEPADGCTKPLIWDKVDCRCECPLKKDCGKNRDWSDSSCSCECKGDGKCQGSKIWCKNNCRCICPTAEPAGGCSAPLKWDDDKCSCACPAKMEEKKEKCVESGKIWNPNTCECGCAQLNCPDNKKANKETCQCECKEVKKCNGGQVFCKDSCSCVCPGGDKDKTCTAPQVYDGVACSCSCPVNMQKPADGCPRPQKWDKEECRCECPVKHDCKNGKVWDETICQCICPRDAPVCTAGKERCGESCECKCINREPKEGCAKPLVWNENTCKCVCPADKQMSPGGCGSGKSFNKLTCQCECDQSASKCGLKRWNADTCKCECQPGMPPEGCGKQTWISDKCKCECSPTITCQAPQILDLNTCECKCPVNMLAQKEKCKSPRQWTDSKCLCECSTTPATCEGKQTWCGEACQCICPGGDKNCGNKKFFDKPSCECKCKNNPTCTSPQVWDADDCECKCPKDKQKPQGGCDGGQKWNDRVCSCGCPVPRPDCTNGQIYNINTCACGCGIDKPSCPKQQIYNWKTCDCECPNGMKEPVGGCGAKTWLDDECQCDCVPGKPKGGCTGAQKWCDKTCKCKCEKEMPTGGCENNKKWCDETCDCVCPQKNTCIAPKVWDAKTCSCICVNPPKCNSPQVLKDTCCCGCQNVKSCKAPQKFIENICDCACPNKKQCKAPLVWSDEFCDCVCPNSASMKTCLSPKEWNKVTCTCDCNPPKPDCCPGTQKWMDDKCKCGCPNAQTDCAGGKKFNDFTCSCGCPSGKLDCTGNTKWSAETCTCGCGDVNRNCGNLKNFNDNLCQCECKNKQEMANCKSPRTWNYDTCKCVCKNADDSDDCVKPQIWLDDQCKCGCPASAQMTCPANKRFIEKSCSCECKSPMPSPIPQGKKWNEDKCVVECANVKTCEGPQRWCDNQCKCICPQVNTKCSDKQKFIESKCECGCETQTQCKDGFRWSNLECGCLCDDKKCPGKQVFDKNTCQCKCPNQKPGDTCGNGKDFCPLDCSCKCKNPKPANGCTGVQEWNEEKCQCECPKDKPKKQCPGGQDWNNHQCQCGCPTPAPTCSNNQKYSNVSCSCGCNPGKPKNGCPGNQIWCDNTCRCVCPKNMEKPADNCKTKWWNDEMCQCVCKPGCPEGGCKGVMKWNANTCSCECPADKAKPASCGDKKSWNDDSCSCQCKSKMPCGGCPPNQQWNEKDCECKCSATGNCPAGQTWNSQTCQCSCPATGKCTGAQVWCSKACKCVCPAQKKCDSPKTWDENSCSCQCPKNMRPPTGGCNAGRTWDDATCSEKCAATPKCDSPKVFDPTTCGCKCGNKPNKLDAGRTWDEQKCKMTCDLPAIPCCHYEGQVYDSNTCKCGCPKEETCKQGFSFSPKSGCKCILECNKKDPGCGAKKIWCQETCKCECASEPPRMGCGPNRYWDKEDCACQCLKTKVCTDSDFSFFSHDTCDCECSNAKDFILNCNQKLNKVSCQPQCIQRPPPEGCAEKFGEFFSWDPKACECKCIEQKTTVKGRVFDKATCNFKCTNEPKTNPKCANTAESWDSQICACKVCSTCKH.

Positions 1–20 (MKTLSSLLLVLAVNVLLIQA) are cleaved as a signal peptide.

As to expression, salivary gland.

The protein localises to the secreted. In terms of biological role, used by the larvae to construct a supramolecular structure, the larval tube. Balbiani ring protein 3 could play a role as a transport protein that binds to other proteins intracellularly and in the gland lumen in order to prevent these from forming water-insoluble fibers too early. The sequence is that of Balbiani ring protein 3 (BR3) from Chironomus tentans (Midge).